The following is a 420-amino-acid chain: ATP phosphoribosyltransferase regulatory subunit (420 aa).

It belongs to the class-II aminoacyl-tRNA synthetase family. HisZ subfamily. As to quaternary structure, heteromultimer composed of HisG and HisZ subunits.

It is found in the cytoplasm. It participates in amino-acid biosynthesis; L-histidine biosynthesis; L-histidine from 5-phospho-alpha-D-ribose 1-diphosphate: step 1/9. Functionally, required for the first step of histidine biosynthesis. May allow the feedback regulation of ATP phosphoribosyltransferase activity by histidine. The protein is ATP phosphoribosyltransferase regulatory subunit of Synechococcus sp. (strain ATCC 27144 / PCC 6301 / SAUG 1402/1) (Anacystis nidulans).